We begin with the raw amino-acid sequence, 504 residues long: U3 snoRNP-associated protein-like YAO (504 aa).

Residues 1-120 (MKYNNEKKKG…DDDDDEDDDE (120 aa)) are disordered. Residues 20–33 (GSNERDPFFEEEPK) show a composition bias toward basic and acidic residues. 2 stretches are compositionally biased toward acidic residues: residues 41–54 (DDDD…DAEE) and 70–81 (EVEDEDEFADET). Over residues 89–106 (LAEEMLNRRREAMRRERE) the composition is skewed to basic and acidic residues. Acidic residues predominate over residues 107–120 (EADNDDDDDEDDDE). WD repeat units lie at residues 159–198 (KHRR…TDKY), 220–259 (NHSR…HVQA), 262–301 (GHRN…FITE), 304–342 (GHQG…RMIY), 344–382 (APAS…PVFV), 413–452 (SANS…IRPL), and 456–496 (PLTG…QNGV).

Belongs to the WD repeat RRP9 family. In terms of tissue distribution, expressed in tissues with active in cell division such as shoot apexes, root tips, lateral root primordia, embryos, endosperm, pollen grains and embryo sacs.

The protein localises to the nucleus. The protein resides in the nucleolus. Its function is as follows. Component of a nucleolar small nuclear ribonucleoprotein particle (snoRNP) thought to participate in the processing and modification of pre-ribosomal RNA. Essential for embryogenesis. Plays a critical role in embryo sac development and gametic cell fate. Required for the correct positioning of the first division plane of zygote. May function during early embryogenesis. This Arabidopsis thaliana (Mouse-ear cress) protein is U3 snoRNP-associated protein-like YAO.